Reading from the N-terminus, the 263-residue chain is Tryptophan synthase alpha chain (263 aa).

Catalysis depends on proton acceptor residues Glu46 and Asp57.

This sequence belongs to the TrpA family. Tetramer of two alpha and two beta chains.

The enzyme catalyses (1S,2R)-1-C-(indol-3-yl)glycerol 3-phosphate + L-serine = D-glyceraldehyde 3-phosphate + L-tryptophan + H2O. Its pathway is amino-acid biosynthesis; L-tryptophan biosynthesis; L-tryptophan from chorismate: step 5/5. Its function is as follows. The alpha subunit is responsible for the aldol cleavage of indoleglycerol phosphate to indole and glyceraldehyde 3-phosphate. This is Tryptophan synthase alpha chain from Bacteroides fragilis (strain ATCC 25285 / DSM 2151 / CCUG 4856 / JCM 11019 / LMG 10263 / NCTC 9343 / Onslow / VPI 2553 / EN-2).